The primary structure comprises 380 residues: Cytochrome b (380 aa).

4 consecutive transmembrane segments (helical) span residues 34-54, 78-99, 114-134, and 179-199; these read FGSL…LLAM, WLIR…YLHI, WNTG…GYVL, and FFAL…IHLT. Positions 84 and 98 each coordinate heme b. 2 residues coordinate heme b: His-183 and His-197. His-202 is a binding site for a ubiquinone. The next 4 helical transmembrane spans lie at 227-247, 289-309, 321-341, and 348-368; these read SKDI…ALLS, LGGV…PFLH, LSQA…WIGS, and FIII…ILLP.

Belongs to the cytochrome b family. As to quaternary structure, the cytochrome bc1 complex contains 11 subunits: 3 respiratory subunits (MT-CYB, CYC1 and UQCRFS1), 2 core proteins (UQCRC1 and UQCRC2) and 6 low-molecular weight proteins (UQCRH/QCR6, UQCRB/QCR7, UQCRQ/QCR8, UQCR10/QCR9, UQCR11/QCR10 and a cleavage product of UQCRFS1). This cytochrome bc1 complex then forms a dimer. The cofactor is heme b.

It localises to the mitochondrion inner membrane. In terms of biological role, component of the ubiquinol-cytochrome c reductase complex (complex III or cytochrome b-c1 complex) that is part of the mitochondrial respiratory chain. The b-c1 complex mediates electron transfer from ubiquinol to cytochrome c. Contributes to the generation of a proton gradient across the mitochondrial membrane that is then used for ATP synthesis. This chain is Cytochrome b (MT-CYB), found in Phalcoboenus australis (Striated caracara).